A 686-amino-acid polypeptide reads, in one-letter code: MPNIPLRVNSLATEHPNNAQNSDKMPTFDAIFSHLSAIASHNSHQIIALLPSSDANWPAALIAERLTQAGSKQHLQKQHLHLHLFAQHQASWLKALAESETLASPAKEQIKAICDARVSGSHRLKLVNARLIIDIHLGDPLTQLKDLVSPSLASQAIQGWLANTQATDEALIWQMARLSQDNAEFLLLENNDVNLDKTSNNANTNLLTQLIIKAGFTCYRLNLSLKDDQLVTLAEKPSLASLEIAMVERRALRRQQLDKFAFNPLTQGREGETAIIGGGVASANLALSLAERGKKVSFFCMDKAPGEQASGNKQGAIYPLLTPEHGSLSHYFLLGYLFSRQRIKQLLESGHEIPHDFCGVLQTGHDERSHKRLTKIINAQPWAESIARPVDALQATALAGVTIEHQGIYYPLAGWVSPQAFTRAAISQAERLGKQTSHYQCQITAIRFENQQWYLSAIQDGQKVEFGPYANLVLANGRHLTDFAQTDHLPISGFRGQVSHIPERAPLKDLKTVLCAHGYLTPAHDKLHCTGASYVKDASNLDYSAVEQVENLDKIRTSYGGEWTKAVDITGHSARVGVRMVTRDHAPMMGCAPDFEAISATYISHQQTKKSTKESAKCWQTTSAPVHQGLFILGGLGSRGLTSGPLAAEILAAQLCGELLPATQDILALLNPNRMWMRKLIKGKAL.

The interval 1–258 (MPNIPLRVNS…RRALRRQQLD (258 aa)) is tRNA (mnm(5)s(2)U34)-methyltransferase. Residues 276-686 (IGGGVASANL…MRKLIKGKAL (411 aa)) are FAD-dependent cmnm(5)s(2)U34 oxidoreductase.

The protein in the N-terminal section; belongs to the methyltransferase superfamily. tRNA (mnm(5)s(2)U34)-methyltransferase family. In the C-terminal section; belongs to the DAO family. FAD is required as a cofactor.

Its subcellular location is the cytoplasm. It carries out the reaction 5-aminomethyl-2-thiouridine(34) in tRNA + S-adenosyl-L-methionine = 5-methylaminomethyl-2-thiouridine(34) in tRNA + S-adenosyl-L-homocysteine + H(+). Its function is as follows. Catalyzes the last two steps in the biosynthesis of 5-methylaminomethyl-2-thiouridine (mnm(5)s(2)U) at the wobble position (U34) in tRNA. Catalyzes the FAD-dependent demodification of cmnm(5)s(2)U34 to nm(5)s(2)U34, followed by the transfer of a methyl group from S-adenosyl-L-methionine to nm(5)s(2)U34, to form mnm(5)s(2)U34. The polypeptide is tRNA 5-methylaminomethyl-2-thiouridine biosynthesis bifunctional protein MnmC (Shewanella loihica (strain ATCC BAA-1088 / PV-4)).